The chain runs to 215 residues: Adenylate kinase (215 aa).

10–15 (GAGKGT) serves as a coordination point for ATP. The tract at residues 30 to 59 (STGDMLREAVAAGTELGKKVKEIIEKGLLV) is NMP. Residues threonine 31, arginine 36, 57-59 (LLV), 85-88 (GFPR), and glutamine 92 contribute to the AMP site. The segment at 126–163 (SRRVCPSCGKVYNLLTIKPKNDMLCDDCNIGLIQREDD) is LID. ATP is bound at residue arginine 127. Positions 130 and 133 each coordinate Zn(2+). 136–137 (VY) lines the ATP pocket. Residues cysteine 150 and cysteine 153 each coordinate Zn(2+). The AMP site is built by arginine 160 and arginine 171. Leucine 199 provides a ligand contact to ATP.

It belongs to the adenylate kinase family. In terms of assembly, monomer.

The protein resides in the cytoplasm. It carries out the reaction AMP + ATP = 2 ADP. The protein operates within purine metabolism; AMP biosynthesis via salvage pathway; AMP from ADP: step 1/1. In terms of biological role, catalyzes the reversible transfer of the terminal phosphate group between ATP and AMP. Plays an important role in cellular energy homeostasis and in adenine nucleotide metabolism. In Kosmotoga olearia (strain ATCC BAA-1733 / DSM 21960 / TBF 19.5.1), this protein is Adenylate kinase.